The chain runs to 339 residues: Ketol-acid reductoisomerase (NADP(+)) (339 aa).

The region spanning 1-182 (MRVYYDRDAD…GGGRAGIIET (182 aa)) is the KARI N-terminal Rossmann domain. Residues 24–27 (YGSQ), R48, S51, and 83–86 (DEGQ) each bind NADP(+). Residue H108 is part of the active site. NADP(+) is bound at residue G134. The 146-residue stretch at 183 to 328 (TFKEEVETDL…EKLRAMMPWI (146 aa)) folds into the KARI C-terminal knotted domain. Mg(2+)-binding residues include D191, E195, E227, and E231. S252 lines the substrate pocket.

The protein belongs to the ketol-acid reductoisomerase family. Requires Mg(2+) as cofactor.

The enzyme catalyses (2R)-2,3-dihydroxy-3-methylbutanoate + NADP(+) = (2S)-2-acetolactate + NADPH + H(+). It catalyses the reaction (2R,3R)-2,3-dihydroxy-3-methylpentanoate + NADP(+) = (S)-2-ethyl-2-hydroxy-3-oxobutanoate + NADPH + H(+). It functions in the pathway amino-acid biosynthesis; L-isoleucine biosynthesis; L-isoleucine from 2-oxobutanoate: step 2/4. Its pathway is amino-acid biosynthesis; L-valine biosynthesis; L-valine from pyruvate: step 2/4. Functionally, involved in the biosynthesis of branched-chain amino acids (BCAA). Catalyzes an alkyl-migration followed by a ketol-acid reduction of (S)-2-acetolactate (S2AL) to yield (R)-2,3-dihydroxy-isovalerate. In the isomerase reaction, S2AL is rearranged via a Mg-dependent methyl migration to produce 3-hydroxy-3-methyl-2-ketobutyrate (HMKB). In the reductase reaction, this 2-ketoacid undergoes a metal-dependent reduction by NADPH to yield (R)-2,3-dihydroxy-isovalerate. The polypeptide is Ketol-acid reductoisomerase (NADP(+)) (Gluconobacter oxydans (strain 621H) (Gluconobacter suboxydans)).